Reading from the N-terminus, the 213-residue chain is Ras-like protein rasU (213 aa).

21–28 (GDGGVGKT) is a GTP binding site. Positions 43–51 (YDPTIEDLY) match the Effector region motif. Residues 68–72 (DTAGQ) and 126–129 (NKSD) contribute to the GTP site. Cys-210 carries the cysteine methyl ester modification. The S-geranylgeranyl cysteine moiety is linked to residue Cys-210. A propeptide spans 211 to 213 (KMI) (removed in mature form).

The protein belongs to the small GTPase superfamily. Ras family.

Its subcellular location is the cell membrane. It catalyses the reaction GTP + H2O = GDP + phosphate + H(+). Ras proteins bind GDP/GTP and possess intrinsic GTPase activity. The sequence is that of Ras-like protein rasU (rasU) from Dictyostelium discoideum (Social amoeba).